The sequence spans 619 residues: E3 ubiquitin-protein ligase DTX4 (619 aa).

WWE domains follow at residues 1 to 78 and 79 to 155; these read MLLA…PVRR and NYYD…RVRR. Disordered stretches follow at residues 238–281 and 358–389; these read KPLD…PGPN and PPPV…KGKT. The segment covering 261 to 273 has biased composition (polar residues); sequence QASSMPTGTTMGS. The segment covering 378–387 has biased composition (basic residues); that stretch reads KTTKKQAKKG. An RING-type; atypical zinc finger spans residues 409 to 468; sequence CTICMERLTAPSGYKGPQPTVKPDLVGKLSRCGHVYHIYCLVAMYNNGNKDGSLQCPTCK.

This sequence belongs to the Deltex family. As to quaternary structure, interacts with NLRP4.

It is found in the cytoplasm. It catalyses the reaction S-ubiquitinyl-[E2 ubiquitin-conjugating enzyme]-L-cysteine + [acceptor protein]-L-lysine = [E2 ubiquitin-conjugating enzyme]-L-cysteine + N(6)-ubiquitinyl-[acceptor protein]-L-lysine.. The protein operates within protein modification; protein ubiquitination. Functionally, regulator of Notch signaling, a signaling pathway involved in cell-cell communications that regulates a broad spectrum of cell-fate determinations. Functions as a ubiquitin ligase protein in vivo, mediating 'Lys48'-linked polyubiquitination and promoting degradation of TBK1, targeting to TBK1 requires interaction with NLRP4. The chain is E3 ubiquitin-protein ligase DTX4 (DTX4) from Homo sapiens (Human).